Reading from the N-terminus, the 193-residue chain is Peptidyl-tRNA hydrolase (193 aa).

Residue Tyr16 coordinates tRNA. His21 (proton acceptor) is an active-site residue. 3 residues coordinate tRNA: Phe67, Asn69, and Asn115.

It belongs to the PTH family. In terms of assembly, monomer.

Its subcellular location is the cytoplasm. The enzyme catalyses an N-acyl-L-alpha-aminoacyl-tRNA + H2O = an N-acyl-L-amino acid + a tRNA + H(+). In terms of biological role, hydrolyzes ribosome-free peptidyl-tRNAs (with 1 or more amino acids incorporated), which drop off the ribosome during protein synthesis, or as a result of ribosome stalling. Catalyzes the release of premature peptidyl moieties from peptidyl-tRNA molecules trapped in stalled 50S ribosomal subunits, and thus maintains levels of free tRNAs and 50S ribosomes. The protein is Peptidyl-tRNA hydrolase of Baumannia cicadellinicola subsp. Homalodisca coagulata.